Consider the following 8892-residue polypeptide: Nonribosomal peptide synthetase 32 (8892 aa).

Positions Glu12–Asn85 constitute a Carrier 1 domain. At Ser46 the chain carries O-(pantetheine 4'-phosphoryl)serine. Residues Ala88–Ile112 are disordered. The span at Asn93–Asn108 shows a compositional bias: low complexity. The interval Pro567–Phe956 is condensation 1. The adenylation 1 stretch occupies residues Lys989–Arg1386. Residues Ile1523–Gln1599 enclose the Carrier 2 domain. At Ser1560 the chain carries O-(pantetheine 4'-phosphoryl)serine. The interval Gly1609–Asn2039 is epimerization 1. The interval Glu2083–Leu2518 is condensation 2. The tract at residues Ser2543 to Arg2934 is adenylation 2. The Carrier 3 domain occupies Ser3061–Arg3137. Ser3098 carries the post-translational modification O-(pantetheine 4'-phosphoryl)serine. Residues Leu3153–Glu3590 are epimerization 2. Positions Glu3634 to Thr4061 are condensation 3. The adenylation 3 stretch occupies residues Thr4098 to Arg4488. The Carrier 4 domain occupies Ala4627–Cys4703. Residue Ser4664 is modified to O-(pantetheine 4'-phosphoryl)serine. The interval Glu4760–Leu5181 is condensation 4. The tract at residues Thr5205–Arg5605 is adenylation 4. Residues Met5745–Gly5821 form the Carrier 5 domain. Ser5782 is modified (O-(pantetheine 4'-phosphoryl)serine). A condensation 5 region spans residues Glu5868 to Ile6285. An adenylation 5 region spans residues Gln6307–Arg6700. Positions Glu6834–Glu6911 constitute a Carrier 6 domain. Ser6872 is subject to O-(pantetheine 4'-phosphoryl)serine. Positions Asn6923–Val7360 are epimerization 3. Positions Val7403–Ile7834 are condensation 6. The adenylation 6 stretch occupies residues Gln7855 to Ile8253. Residues Ala8380–Ile8456 enclose the Carrier 7 domain. Ser8417 bears the O-(pantetheine 4'-phosphoryl)serine mark. The segment at His8490 to Val8878 is condensation 7.

This sequence belongs to the NRP synthetase family.

The protein operates within secondary metabolite biosynthesis. Functionally, nonribosomal peptide synthetase; part of the gene cluster that mediates the biosynthesis of the lipopeptides W493 A and B. W493 A and B consist of six amino acid residues D-allo-thr, L-Ala, D-Ala, L-Gln, D-Tyr, and L-Val/L-Ile linked to a 3-hydroxy-4-methyltetradecanoic acid polyketide chain. The biosynthesis starts with formation of the linear polyketide chain by the highly reducing polyketide synthase PKS40. The gene cluster contains a putative acyl-CoA ligase (FPSE_09184) for formation of a CoA thioester polyketide. The thiol bond could be hydrolyzed by the putative thioesterase (FPSE_09186) and then accepted by the first T domain in module 1 of NRPS32. The second T domain is responsible for accepting a threonine, which is adenylated by the A domain and epimerized to the D-allo-threonine formed by the E domain. The five successive modules incorporate Ala, Ala, Gln, Tyr, and Val/Ile into the final product, which is released by cyclization. The protein is Nonribosomal peptide synthetase 32 of Fusarium pseudograminearum (strain CS3096) (Wheat and barley crown-rot fungus).